Here is a 152-residue protein sequence, read N- to C-terminus: Protein FYV5 (152 aa).

A run of 5 helical transmembrane segments spans residues 26–46, 56–76, 82–102, 106–126, and 127–147; these read IISI…RICS, LISS…SCVL, VGII…VLFL, LIDL…TPFF, and FMLH…YLII.

The protein resides in the cell membrane. The protein localises to the secreted. It localises to the cell wall. In terms of biological role, involved in maintaining an adequate ionic strength homeostasis of the cellular aqueous environment, necessary for normal growth rate. Required for survival upon exposure to K1 killer toxin and hence plays a role in cell wall glucan synthesis. Required for dithiothreitol (DTT) resistance. Involved in cell cycle progression. In Saccharomyces cerevisiae (strain ATCC 204508 / S288c) (Baker's yeast), this protein is Protein FYV5 (FYV5).